The sequence spans 607 residues: Dihydroxy-acid dehydratase (607 aa).

Residue Asp-81 participates in Mg(2+) binding. Cys-122 contacts [2Fe-2S] cluster. Residues Asp-123 and Lys-124 each coordinate Mg(2+). Lys-124 is modified (N6-carboxylysine). Cys-195 contacts [2Fe-2S] cluster. Glu-489 is a Mg(2+) binding site. The active-site Proton acceptor is Ser-515.

This sequence belongs to the IlvD/Edd family. As to quaternary structure, homodimer. [2Fe-2S] cluster is required as a cofactor. It depends on Mg(2+) as a cofactor.

The catalysed reaction is (2R)-2,3-dihydroxy-3-methylbutanoate = 3-methyl-2-oxobutanoate + H2O. The enzyme catalyses (2R,3R)-2,3-dihydroxy-3-methylpentanoate = (S)-3-methyl-2-oxopentanoate + H2O. It functions in the pathway amino-acid biosynthesis; L-isoleucine biosynthesis; L-isoleucine from 2-oxobutanoate: step 3/4. The protein operates within amino-acid biosynthesis; L-valine biosynthesis; L-valine from pyruvate: step 3/4. Functionally, functions in the biosynthesis of branched-chain amino acids. Catalyzes the dehydration of (2R,3R)-2,3-dihydroxy-3-methylpentanoate (2,3-dihydroxy-3-methylvalerate) into 2-oxo-3-methylpentanoate (2-oxo-3-methylvalerate) and of (2R)-2,3-dihydroxy-3-methylbutanoate (2,3-dihydroxyisovalerate) into 2-oxo-3-methylbutanoate (2-oxoisovalerate), the penultimate precursor to L-isoleucine and L-valine, respectively. In Deinococcus radiodurans (strain ATCC 13939 / DSM 20539 / JCM 16871 / CCUG 27074 / LMG 4051 / NBRC 15346 / NCIMB 9279 / VKM B-1422 / R1), this protein is Dihydroxy-acid dehydratase.